Here is a 726-residue protein sequence, read N- to C-terminus: Elongation factor 2 (726 aa).

Positions 19–260 (DRIRNIGICA…MVIKHLPSPP (242 aa)) constitute a tr-type G domain. GTP-binding positions include 28–35 (AHIDHGKT), 94–98 (DTPGH), and 148–151 (NKVD). His-602 bears the Diphthamide mark.

This sequence belongs to the TRAFAC class translation factor GTPase superfamily. Classic translation factor GTPase family. EF-G/EF-2 subfamily.

Its subcellular location is the cytoplasm. In terms of biological role, catalyzes the GTP-dependent ribosomal translocation step during translation elongation. During this step, the ribosome changes from the pre-translocational (PRE) to the post-translocational (POST) state as the newly formed A-site-bound peptidyl-tRNA and P-site-bound deacylated tRNA move to the P and E sites, respectively. Catalyzes the coordinated movement of the two tRNA molecules, the mRNA and conformational changes in the ribosome. This is Elongation factor 2 (fusA) from Methanocaldococcus jannaschii (strain ATCC 43067 / DSM 2661 / JAL-1 / JCM 10045 / NBRC 100440) (Methanococcus jannaschii).